The sequence spans 310 residues: U-megalopygitoxin(8)-Mo15 (310 aa).

The first 27 residues, 1–27 (MARFSSKNLTKLFQYLVLSLLSPVAFG), serve as a signal peptide directing secretion.

Belongs to the megalysin family. Contains 3 disulfide bonds. Expressed by the venom apparatus.

It localises to the secreted. It is found in the target cell membrane. Functionally, may function as a large pore-forming protein. This chain is U-megalopygitoxin(8)-Mo15, found in Megalopyge opercularis (Southern flannel moth).